The following is a 104-amino-acid chain: Ig lambda-1 chain C region (104 aa).

The region spanning 6 to 99 is the Ig-like domain; the sequence is PSVTLFPPSS…EENTVEKSLS (94 aa). The cysteines at positions 27 and 85 are disulfide-linked.

The protein is Ig lambda-1 chain C region of Rattus norvegicus (Rat).